Reading from the N-terminus, the 149-residue chain is MKIWVDADACPKVIRETIVRAAERTGVECTFVANHVVPVPRRPNIHSLQVPAGFDIADNEIVKRVEPNDLVITSDIPLADEVITKGALALSSRGELYTKDTIKARLNIRDFMETMRSSGIQTGGPAALSQTERREFANHLDRILAKFKK.

It belongs to the UPF0178 family.

This Vibrio vulnificus (strain CMCP6) protein is UPF0178 protein VV1_1847.